We begin with the raw amino-acid sequence, 27 residues long: Voltage-dependent anion-selective channel protein (27 aa).

This sequence belongs to the eukaryotic mitochondrial porin family. As to quaternary structure, interacts with hexokinases. Photoreceptors.

It localises to the mitochondrion outer membrane. In terms of biological role, forms a channel through the cell membrane that allows diffusion of small hydrophilic molecules. In Doryteuthis pealeii (Longfin inshore squid), this protein is Voltage-dependent anion-selective channel protein.